The following is a 487-amino-acid chain: MATTSPAAPRPKSKSSSLLSTLFSRPLPLYVSAFLLRIVLLLYGLWQDANSPLKYTDIDYLVFTDAARFVSRGESPYARETYRYTPILAWLLLPTTWTAGAQWGPWAAKVINVAWFSFGKVLFAAADLVAGWLIEQVLVMGKDFPSSAAKGKEKDTEKTKEGGKKGPSVTASTGMDPSRARAFAAIWLLNPMVATISTRGSSEGLLGVLVMALLWAVLSRRITLAGLLLGFSVHFKIYPFIYAPAIVWWMDQERLSGVRAGGGGGGGGQKKTSSSFRKTLTRFLTLPRLLLAFTSLATFLSLNFLMYRLYGHPFLQETYLHHVTRIDHRHNFSPYNTQLYLSSASVSPSHSAAEPKFKIESLAFLPQLVLSTILIPLTLAKKDLPTSLLAQTFAFVTFNKVCTSQYFLWYLVLLPLYLPRSSFWTSKRMGLVALGLWVLGQALWLQQAYELEFLGRSTFLPGLWMASLGFFVVNCWILGVIVGDGGR.

A run of 3 helical transmembrane segments spans residues 26–46 (PLPLYVSAFLLRIVLLLYGLW), 87–107 (ILAWLLLPTTWTAGAQWGPWA), and 121–141 (VLFAAADLVAGWLIEQVLVMG). Positions 147–175 (SAAKGKEKDTEKTKEGGKKGPSVTASTGM) are disordered. The span at 150 to 164 (KGKEKDTEKTKEGGK) shows a compositional bias: basic and acidic residues. A run of 7 helical transmembrane segments spans residues 205 to 225 (LLGVLVMALLWAVLSRRITLA), 227 to 247 (LLLGFSVHFKIYPFIYAPAIV), 289 to 309 (LLLAFTSLATFLSLNFLMYRL), 359 to 379 (IESLAFLPQLVLSTILIPLTL), 393 to 413 (FAFVTFNKVCTSQYFLWYLVL), 429 to 449 (MGLVALGLWVLGQALWLQQAY), and 462 to 482 (GLWMASLGFFVVNCWILGVIV).

This sequence belongs to the PIGM family.

Its subcellular location is the endoplasmic reticulum membrane. It participates in glycolipid biosynthesis; glycosylphosphatidylinositol-anchor biosynthesis. Mannosyltransferase involved in glycosylphosphatidylinositol-anchor biosynthesis. Transfers the first alpha-1,4-mannose to GlcN-acyl-PI during GPI precursor assembly. Required for cell wall integrity. The polypeptide is GPI mannosyltransferase 1 (gim-1) (Neurospora crassa (strain ATCC 24698 / 74-OR23-1A / CBS 708.71 / DSM 1257 / FGSC 987)).